Consider the following 129-residue polypeptide: MNPPNSTCELGRQGEALAATYLQNEGYQILERNYRFRHNEIDLIALDGSTLCFVEVKARLSNKAGSPLDAVTVAKQREIIRAAQAYLTFSGQECDCRFDVIGVNVHAMHEARISSFTIEHIKDAFWVEQ.

Belongs to the UPF0102 family.

This is UPF0102 protein Cag_1992 from Chlorobium chlorochromatii (strain CaD3).